The following is a 318-amino-acid chain: Mechanosensory protein 3 (318 aa).

2 consecutive LIM zinc-binding domains span residues 27-86 (NKCY…DYSA) and 87-152 (HRCA…PMDD). Residues 214-273 (RRGPRTTIRQNQLDVLNEMFSNTPKPSKHARAKLALETGLSMRVIQVWFQNRRSKERRLK) constitute a DNA-binding region (homeobox).

It localises to the nucleus. Specifies differentiation of the set of six touch receptor neurons. Binds cooperatively as a heterodimer with unc-86 to sites in the mec-3 gene promoter. This is Mechanosensory protein 3 (mec-3) from Caenorhabditis briggsae.